We begin with the raw amino-acid sequence, 468 residues long: Mitochondrial distribution and morphology protein 10 (468 aa).

The protein belongs to the MDM10 family. In terms of assembly, component of the ER-mitochondria encounter structure (ERMES) or MDM complex, composed of MMM1, MDM10, MDM12 and MDM34. Associates with the mitochondrial outer membrane sorting assembly machinery SAM(core) complex.

The protein resides in the mitochondrion outer membrane. Its function is as follows. Component of the ERMES/MDM complex, which serves as a molecular tether to connect the endoplasmic reticulum and mitochondria. Components of this complex are involved in the control of mitochondrial shape and protein biogenesis and may function in phospholipid exchange. MDM10 is involved in the late assembly steps of the general translocase of the mitochondrial outer membrane (TOM complex). Functions in the TOM40-specific route of the assembly of outer membrane beta-barrel proteins, including the association of TOM40 with the receptor TOM22 and small TOM proteins. Can associate with the SAM(core) complex as well as the MDM12-MMM1 complex, both involved in late steps of the major beta-barrel assembly pathway, that is responsible for biogenesis of all outer membrane beta-barrel proteins. May act as a switch that shuttles between both complexes and channels precursor proteins into the TOM40-specific pathway. Plays a role in mitochondrial morphology and in the inheritance of mitochondria. The sequence is that of Mitochondrial distribution and morphology protein 10 from Blastomyces gilchristii (strain SLH14081) (Blastomyces dermatitidis).